The chain runs to 347 residues: MAPQAHDRDKALDLALAQIDKNFGKGSVMRLGEGVRQPIAVIPTGSIALDVALGIGGLPRGRVVEIYGPESSGKTTVALHAVANAQAAGGIAAFIDAEHALDPDYAQKLGVDTDALLVSQPDTGEQALEIADMLIRSGALDILVVDSVAALVPRAEIEGEMGDSHVGLQARLMSQALRKMTGALSNSGTTAIFINQLREKIGVMFGSPETTTGGKALKFYSSVRLDVRRIETLKDGTDAVGNRTRVKVVKNKVAPPFKQAEFDILYGLGISKEGSLIDMGVEHGFIRKSGSWYTYEGDQLGQGKENARKFLLENTDIRDEIEKKIKEKLGIGADVTAATDDAAPVEF.

68–75 (GPESSGKT) provides a ligand contact to ATP.

This sequence belongs to the RecA family.

The protein resides in the cytoplasm. Its function is as follows. Can catalyze the hydrolysis of ATP in the presence of single-stranded DNA, the ATP-dependent uptake of single-stranded DNA by duplex DNA, and the ATP-dependent hybridization of homologous single-stranded DNAs. It interacts with LexA causing its activation and leading to its autocatalytic cleavage. The chain is Protein RecA from Rhodococcus jostii (strain RHA1).